A 315-amino-acid polypeptide reads, in one-letter code: Ribosomal RNA small subunit methyltransferase H (315 aa).

Residues 35–37 (GGH), aspartate 55, phenylalanine 80, aspartate 102, and glutamine 109 each bind S-adenosyl-L-methionine.

The protein belongs to the methyltransferase superfamily. RsmH family.

The protein localises to the cytoplasm. The catalysed reaction is cytidine(1402) in 16S rRNA + S-adenosyl-L-methionine = N(4)-methylcytidine(1402) in 16S rRNA + S-adenosyl-L-homocysteine + H(+). Specifically methylates the N4 position of cytidine in position 1402 (C1402) of 16S rRNA. The chain is Ribosomal RNA small subunit methyltransferase H from Shewanella pealeana (strain ATCC 700345 / ANG-SQ1).